The following is a 565-amino-acid chain: Dihydroxy-acid dehydratase (565 aa).

Asp80 lines the Mg(2+) pocket. Cys121 contributes to the [2Fe-2S] cluster binding site. The Mg(2+) site is built by Asp122 and Lys123. Position 123 is an N6-carboxylysine (Lys123). Residue Cys194 participates in [2Fe-2S] cluster binding. Glu447 contacts Mg(2+). Catalysis depends on Ser473, which acts as the Proton acceptor.

Belongs to the IlvD/Edd family. In terms of assembly, homodimer. [2Fe-2S] cluster serves as cofactor. The cofactor is Mg(2+).

The enzyme catalyses (2R)-2,3-dihydroxy-3-methylbutanoate = 3-methyl-2-oxobutanoate + H2O. The catalysed reaction is (2R,3R)-2,3-dihydroxy-3-methylpentanoate = (S)-3-methyl-2-oxopentanoate + H2O. Its pathway is amino-acid biosynthesis; L-isoleucine biosynthesis; L-isoleucine from 2-oxobutanoate: step 3/4. It participates in amino-acid biosynthesis; L-valine biosynthesis; L-valine from pyruvate: step 3/4. Functionally, functions in the biosynthesis of branched-chain amino acids. Catalyzes the dehydration of (2R,3R)-2,3-dihydroxy-3-methylpentanoate (2,3-dihydroxy-3-methylvalerate) into 2-oxo-3-methylpentanoate (2-oxo-3-methylvalerate) and of (2R)-2,3-dihydroxy-3-methylbutanoate (2,3-dihydroxyisovalerate) into 2-oxo-3-methylbutanoate (2-oxoisovalerate), the penultimate precursor to L-isoleucine and L-valine, respectively. This Chlorobium luteolum (strain DSM 273 / BCRC 81028 / 2530) (Pelodictyon luteolum) protein is Dihydroxy-acid dehydratase.